An 849-amino-acid polypeptide reads, in one-letter code: Membrane protein-large ribosomal subunit bL9 fusion protein (849 aa).

A unknown region spans residues 1–680 (MFSKNKHNTK…TQLEGTNIKT (680 aa)). Helical transmembrane passes span 11-31 (FIVI…FDFQ) and 64-84 (IIFF…IISF). In terms of domain architecture, GGDEF spans 214–342 (KTLAIAMIAF…GGDQVVVNIE (129 aa)). The interval 681–849 (VTDTLKHFLK…FLNVTERKSK (169 aa)) is large ribosomal subunit protein bL9.

This sequence belongs to the bacterial ribosomal protein bL9 family.

The protein localises to the cell membrane. In terms of biological role, binds to the 23S rRNA. The polypeptide is Membrane protein-large ribosomal subunit bL9 fusion protein (Aster yellows witches'-broom phytoplasma (strain AYWB)).